A 61-amino-acid polypeptide reads, in one-letter code: Chi-conotoxin MrIA (61 aa).

Positions Met-1–Gly-19 are cleaved as a signal peptide. The propeptide occupies Val-20 to Arg-48. 2 disulfides stabilise this stretch: Cys-52–Cys-61 and Cys-53–Cys-58. Pro-60 bears the 4-hydroxyproline mark.

Belongs to the conotoxin T superfamily. Expressed by the venom duct.

The protein resides in the secreted. In terms of biological role, chi-conotoxins inhibit the neuronal noradrenaline transporter (NET/SLC6A2). Activity has been described on both human (inhibition of norepinephrine uptake is IC(50)=1.26 uM) and rat (pIC(50)=6.21 corresponding IC(50)=0.16 uM) transporters. Acts as a reversible non-competitive inhibitor. The protein is Chi-conotoxin MrIA of Conus marmoreus (Marble cone).